The sequence spans 492 residues: DEAD-box ATP-dependent RNA helicase RhpA (492 aa).

The short motif at 20–48 (PSFNDLGLKESVLKSVYEAGFTSPSPIQE) is the Q motif element. A Helicase ATP-binding domain is found at 51–220 (IPAVLQGRDV…DKILENPIKI (170 aa)). Residue 64–71 (AQTGTGKT) coordinates ATP. The DEAD box motif lies at 168–171 (DESD). In terms of domain architecture, Helicase C-terminal spans 231–393 (DITQRFYVIN…EIPTINENQI (163 aa)). A disordered region spans residues 445–492 (AIQNPKEKTPKPSNKKTPQHERARSFKKGQHRDRHPKTNHYSKKPKRR). A compositionally biased stretch (basic residues) spans 469–492 (SFKKGQHRDRHPKTNHYSKKPKRR).

Belongs to the DEAD box helicase family. Homodimer. Interacts with RNase J (rnj), might be a member of a minimal RNA degradosome complex.

Its subcellular location is the cytoplasm. It catalyses the reaction ATP + H2O = ADP + phosphate + H(+). Its function is as follows. DEAD-box RNA helicase probably involved in RNA degradation. Unwinds dsRNA in both 5'- and 3'-directions. In Helicobacter pylori (strain ATCC 700392 / 26695) (Campylobacter pylori), this protein is DEAD-box ATP-dependent RNA helicase RhpA (rhpA).